The chain runs to 397 residues: Cathepsin E-B (397 aa).

A signal peptide spans 1–16; it reads MRQILVLLLFVTLVYG. The propeptide at 17–49 is activation peptide; the sequence is LIRVPLKRQKSIRKTPKEKGKLSHVWTQQGIDM. The Peptidase A1 domain occupies 74-385; the sequence is YFGEISIGTP…DRGNNRVGLA (312 aa). N-linked (GlcNAc...) asparagine glycosylation occurs at asparagine 86. The active site involves aspartate 92. Cysteine 105 and cysteine 110 form a disulfide bridge. N-linked (GlcNAc...) asparagine glycosylation is present at asparagine 130. A disulfide bond links cysteine 268 and cysteine 272. Aspartate 277 is a catalytic residue. Residues cysteine 310 and cysteine 344 are joined by a disulfide bond.

This sequence belongs to the peptidase A1 family. In terms of assembly, homodimer; disulfide-linked. Post-translationally, glycosylated. Contains high mannose-type oligosaccharide. Expressed predominantly in the anterior and posterior adult stomach and at much lower levels in the larval foregut.

The protein resides in the endosome. It carries out the reaction Similar to cathepsin D, but slightly broader specificity.. Functionally, may have a role in immune function. Probably involved in the processing of antigenic peptides during MHC class II-mediated antigen presentation. The protein is Cathepsin E-B (ctse-b) of Xenopus laevis (African clawed frog).